Consider the following 328-residue polypeptide: MTEMYDITIIGGGPAGLFAGFYAGMRTAKTQIIESLPQAGGQVAALYPEKMIYDVGGYAGIKAANLAKELEKQTRLVGTEIRLNETVVDIQAQADFYHVKTNRNEYDTRAILLATGNGAFNPRKLAVEGLDHLEDKKIYYHMPDVEHFENQDILVAGGGDSAIDIALMLEPIAKSISLVHRRQQFRGMERNVQHLQESTVKVMTPYLINGVREAVEGIDVDLKEIGTEALKATHFDKLIVNYGFTSSNKIIKGWEIDLTQEHRMFAVDSLMHTNMKNIYAIGDGVEYPGKLRLIATAFGEGPIAVNQIMNDLYPGKRGPVHSTSMFEK.

FAD is bound by residues glutamate 34, glutamine 42, tyrosine 47, valine 87, phenylalanine 120, aspartate 283, and threonine 323.

This sequence belongs to the ferredoxin--NADP reductase type 2 family. Homodimer. Requires FAD as cofactor.

It carries out the reaction 2 reduced [2Fe-2S]-[ferredoxin] + NADP(+) + H(+) = 2 oxidized [2Fe-2S]-[ferredoxin] + NADPH. The sequence is that of Ferredoxin--NADP reductase from Pediococcus pentosaceus (strain ATCC 25745 / CCUG 21536 / LMG 10740 / 183-1w).